The following is a 628-amino-acid chain: Protein ETHYLENE INSENSITIVE 3 (628 aa).

Positions 38-68 (EDDYTDDEIDVDELERRMWRDKMRLKRLKEQ) form a coiled coil. The span at 66–79 (KEQDKGKEGVDAAK) shows a compositional bias: basic and acidic residues. Positions 66–92 (KEQDKGKEGVDAAKQRQSQEQARRKKM) are disordered. The DNA-binding domain stretch occupies residues 174-306 (TPHTLQELQD…SLARELYPES (133 aa)).

This sequence belongs to the EIN3 family. Acts as a homodimer to bind the primary ethylene response element. Interacts with TAF12B. Interacts with KIN10. Binds to ENAP1 in the presence of ethylene; this reaction facilitates its association with histone. Post-translationally, phosphorylated by KIN10.

The protein localises to the nucleus. Its activity is regulated as follows. Activated by phosphorylation by MPK3 and MPK6. Down-regulated by KIN10 that controls its protein stability under a phosphorylation-dependent manner. Satnilitzed during hypoxia (e.g. submergences) via a ceramides-triggered and CTR1-dependent manner. In terms of biological role, transcription factor acting as a positive regulator in the ethylene response pathway, by promoting histone acetylation in an ENAP1-dependent manner, thus accelerating the expression of ethylene-responsive genes. Binds DNA. Is required for ethylene responsiveness in adult plant tissues. Binds a primary ethylene response element present in the ETHYLENE-RESPONSE-FACTOR1 promoter with consequence to activate the transcription of this gene. The sequence is that of Protein ETHYLENE INSENSITIVE 3 from Arabidopsis thaliana (Mouse-ear cress).